The following is a 138-amino-acid chain: Venom allergen 2 (138 aa).

Positions 1–19 (MKSFVLATCLLGFAQIIYA) are cleaved as a signal peptide.

This sequence belongs to the ant venom allergen 2/4 family. In terms of assembly, homodimer; disulfide-linked. As to expression, expressed by the venom gland.

It localises to the secreted. The sequence is that of Venom allergen 2 from Solenopsis saevissima (Fire ant).